Here is a 96-residue protein sequence, read N- to C-terminus: Putative pterin-4-alpha-carbinolamine dehydratase (96 aa).

It belongs to the pterin-4-alpha-carbinolamine dehydratase family.

The enzyme catalyses (4aS,6R)-4a-hydroxy-L-erythro-5,6,7,8-tetrahydrobiopterin = (6R)-L-erythro-6,7-dihydrobiopterin + H2O. This Prochlorococcus marinus (strain MIT 9313) protein is Putative pterin-4-alpha-carbinolamine dehydratase.